We begin with the raw amino-acid sequence, 585 residues long: MFSVLKKLGWFFKAYWLRYTIAIVLLLAVNVIEMFPPKLLGNAIDDMKAGAFTAEGLLFYIGIFFVLTAAVYIMSYFWMHQLFGGANLMEKILRTKLMGHLLTMSPPFYEKNRTGDLMARGTNDLQAVSLTTGFGILTLVDSTMFMMTIFLTMGFLISWKLTFAAIIPLPVMAIAISLYGSKIHERFTEAQNAFGALNDRVLESVSGVRVIRAYVQETNDVRRFNEMTADVYQKNMKVAFIDSLFEPTVKLLVGASYLIGLGYGAFLVFRNELTLGELVSFNVYLGMMIWPMFAIGELINVMQRGNASLDRVNETLSYETDVTDPKQPADLKEPGDIVFSHVSFTYPSSTSDNLQDISFTVRKGQTVGIAGKTGSGKTTIIKQLLRQYPPGEGSITFSGVPIQQIPLDRLRGWIGYVPQDHLLFSRTVKENILYGKQDATDKEVQQAIAEAHFEKDLHMLPSGLETMVGEKGVALSGGQKQRISIARALMANPEILILDDSLSAVDAKTEAAIIKNIRENRKGKTTFILTHRLSAVEHADLILVMDGGVIAERGTHQELLANNGWYREQYERQQLFTAEEGGAGA.

The region spanning 19–304 (YTIAIVLLLA…IGELINVMQR (286 aa)) is the ABC transmembrane type-1 domain. 6 helical membrane passes run 21-41 (IAIV…KLLG), 57-77 (LLFY…MSYF), 127-147 (AVSL…MFMM), 149-169 (IFLT…IIPL), 249-269 (VKLL…FLVF), and 279-299 (VSFN…GELI). Residues 337–572 (IVFSHVSFTY…NGWYREQYER (236 aa)) form the ABC transporter domain. Residue 371 to 378 (GKTGSGKT) participates in ATP binding.

The protein belongs to the ABC transporter superfamily. In terms of assembly, heterodimer composed of YheH and YheI.

Its subcellular location is the cell membrane. Inhibited by ortho-vanadate. Involved in the transport of four structurally unrelated drugs, including doxorubicin and mitoxantrone. Transmembrane domains (TMD) form a pore in the membrane and the ATP-binding domain (NBD) is responsible for energy generation. The polypeptide is Probable multidrug resistance ABC transporter ATP-binding/permease protein YheI (yheI) (Bacillus subtilis (strain 168)).